The primary structure comprises 175 residues: MSTIAKDQTQVNEKIRAKELRLIGQDGEQIGVKTKNEALEMAERVGLDVVIMAPNAKPPVARIMDYGKYKFEQQKKEKEMKKKQKTINLKEIRLSPTIEEHDFQTKLKNGRKFLEKGDKCKVSIRFRGRAITHKEIGQRVLEKFAEQCKDIATVEQRPKMDGRQMFIMLSPINEK.

It belongs to the IF-3 family. Monomer.

It is found in the cytoplasm. In terms of biological role, IF-3 binds to the 30S ribosomal subunit and shifts the equilibrium between 70S ribosomes and their 50S and 30S subunits in favor of the free subunits, thus enhancing the availability of 30S subunits on which protein synthesis initiation begins. The protein is Translation initiation factor IF-3 of Staphylococcus saprophyticus subsp. saprophyticus (strain ATCC 15305 / DSM 20229 / NCIMB 8711 / NCTC 7292 / S-41).